The chain runs to 488 residues: N-acyl-D-glutamate deacylase (488 aa).

Belongs to the metallo-dependent hydrolases superfamily. N-acyl-D-amino-acid deacylase family. The cofactor is Zn(2+).

Its subcellular location is the cytoplasm. The catalysed reaction is an N-acyl-D-glutamate + H2O = D-glutamate + a carboxylate. With respect to regulation, inhibited by cobalt, copper and EDTA. The polypeptide is N-acyl-D-glutamate deacylase (Alcaligenes xylosoxydans xylosoxydans (Achromobacter xylosoxidans)).